Reading from the N-terminus, the 290-residue chain is MASLNVSLCFFFATCAICEVARRASKALLPAGTYASFARGAVGAAQLAACCLEMRVLVELGPWAGGFGPDLLLTLVFLLFLVHGVTFDGASANPTVALQEFLMVEASLPNTLLKLSAQVLGAQAACALTQRCWAWELSELHLLQSLMAAHCSSTLRTSVLQGMLVEGACTFFFHLSLLHLQHSLLVYRVPALALLVTLMAYTAGPYTSAFFNPALAASVTFHCPGNTLLEYAHVYCLGPVAGMILAVLLHQGHLPRLFQRNLFYRQKSKYRTPRGKLSPGSVDAKMHKGE.

2 consecutive transmembrane segments (helical) span residues 1–21 (MASLNVSLCFFFATCAICEVA) and 67–87 (FGPDLLLTLVFLLFLVHGVTF). The NPA 1 motif lies at 93 to 95 (NPT). 3 helical membrane passes run 112-138 (LLKLSAQVLGAQAACALTQRCWAWELS), 158-178 (SVLQGMLVEGACTFFFHLSLL), and 191-211 (ALALLVTLMAYTAGPYTSAFF). The short motif at 212 to 214 (NPA) is the NPA 2 element. The chain crosses the membrane as a helical span at residues 228–248 (LLEYAHVYCLGPVAGMILAVL). A disordered region spans residues 271–290 (RTPRGKLSPGSVDAKMHKGE).

It belongs to the MIP/aquaporin (TC 1.A.8) family. AQP11/AQP12 subfamily. Restricted to pancreatic acinar cells.

It localises to the membrane. In terms of biological role, aquaporins facilitate the transport of water and small neutral solutes across cell membranes. This Mus musculus (Mouse) protein is Aquaporin-12 (Aqp12).